We begin with the raw amino-acid sequence, 315 residues long: Ribosomal RNA small subunit methyltransferase H (315 aa).

S-adenosyl-L-methionine-binding positions include 35 to 37 (GGH), aspartate 55, phenylalanine 80, aspartate 102, and glutamine 109.

The protein belongs to the methyltransferase superfamily. RsmH family.

Its subcellular location is the cytoplasm. The enzyme catalyses cytidine(1402) in 16S rRNA + S-adenosyl-L-methionine = N(4)-methylcytidine(1402) in 16S rRNA + S-adenosyl-L-homocysteine + H(+). Its function is as follows. Specifically methylates the N4 position of cytidine in position 1402 (C1402) of 16S rRNA. The chain is Ribosomal RNA small subunit methyltransferase H from Shewanella pealeana (strain ATCC 700345 / ANG-SQ1).